The chain runs to 427 residues: Enolase (427 aa).

Position 163 (glutamine 163) interacts with (2R)-2-phosphoglycerate. Catalysis depends on glutamate 205, which acts as the Proton donor. Residues aspartate 242, glutamate 283, and aspartate 310 each coordinate Mg(2+). (2R)-2-phosphoglycerate contacts are provided by lysine 335, arginine 364, serine 365, and lysine 386. The active-site Proton acceptor is lysine 335.

Belongs to the enolase family. Requires Mg(2+) as cofactor.

It is found in the cytoplasm. The protein localises to the secreted. It localises to the cell surface. It carries out the reaction (2R)-2-phosphoglycerate = phosphoenolpyruvate + H2O. Its pathway is carbohydrate degradation; glycolysis; pyruvate from D-glyceraldehyde 3-phosphate: step 4/5. Catalyzes the reversible conversion of 2-phosphoglycerate (2-PG) into phosphoenolpyruvate (PEP). It is essential for the degradation of carbohydrates via glycolysis. This is Enolase from Salinispora tropica (strain ATCC BAA-916 / DSM 44818 / JCM 13857 / NBRC 105044 / CNB-440).